Consider the following 233-residue polypeptide: Enolase-phosphatase E1 (233 aa).

Residues aspartate 16 and glutamate 18 each contribute to the Mg(2+) site. Residues 131–132 and lysine 167 each bind substrate; that span reads SS. Aspartate 193 lines the Mg(2+) pocket.

Belongs to the HAD-like hydrolase superfamily. MasA/MtnC family. Monomer. Mg(2+) is required as a cofactor.

Its subcellular location is the cytoplasm. It localises to the nucleus. It carries out the reaction 5-methylsulfanyl-2,3-dioxopentyl phosphate + H2O = 1,2-dihydroxy-5-(methylsulfanyl)pent-1-en-3-one + phosphate. It participates in amino-acid biosynthesis; L-methionine biosynthesis via salvage pathway; L-methionine from S-methyl-5-thio-alpha-D-ribose 1-phosphate: step 3/6. It functions in the pathway amino-acid biosynthesis; L-methionine biosynthesis via salvage pathway; L-methionine from S-methyl-5-thio-alpha-D-ribose 1-phosphate: step 4/6. In terms of biological role, bifunctional enzyme that catalyzes the enolization of 2,3-diketo-5-methylthiopentyl-1-phosphate (DK-MTP-1-P) into the intermediate 2-hydroxy-3-keto-5-methylthiopentenyl-1-phosphate (HK-MTPenyl-1-P), which is then dephosphorylated to form the acireductone 1,2-dihydroxy-3-keto-5-methylthiopentene (DHK-MTPene). This is Enolase-phosphatase E1 from Meyerozyma guilliermondii (strain ATCC 6260 / CBS 566 / DSM 6381 / JCM 1539 / NBRC 10279 / NRRL Y-324) (Yeast).